Consider the following 881-residue polypeptide: Receptor-like protein 41 (881 aa).

An N-terminal signal peptide occupies residues 1–21; sequence MSELLLRLNFLLLLLLSCVSP. Over 22–844 the chain is Extracellular; it reads SSFVTFNNPV…EEQEQVLNWE (823 aa). 5 N-linked (GlcNAc...) asparagine glycosylation sites follow: asparagine 58, asparagine 70, asparagine 91, asparagine 109, and asparagine 145. 16 LRR repeats span residues 97–121, 122–145, 146–169, 170–195, 197–219, 220–244, 245–267, 268–291, 293–317, 319–340, 342–364, 365–390, 391–412, 413–437, 439–462, and 463–486; these read FHELRSLLLIHNNFTSSSISSKFGM, LNKLEVLFLSSSGFLGQVPFSFSN, LSMLSALDLSDNELTGSLSFVRNL, RKLRVLDVSYNHFSGILNPNSSLFEL, HLTYLSLGSNSFTSSTLPYEFGN, LNKLELLDVSSNSFFGQVPPTISNL, TQLTELYLPLNDFTGSLPLVQNL, TKLSILALFGNHFSGTIPSSLFTM, FLSYLSLKGNNLNGSIEVPNSSSSS, LESLYLGKNHFEGKILKPISKL, NLKELDLSFLSTSYPIDLSLFSS, FKSLLVLDLTGDWISQAGLSSDSYIS, LTLEALYMKQCNISDFPNILKS, LPNLECIDVSNNRVSGKIPEWLWSL, RLSSVFIGDNLLTGFEGSSEILVN, and SSVQILVLDSNSLEGALPHLPLSI. Residue asparagine 189 is glycosylated (N-linked (GlcNAc...) asparagine). Residues asparagine 243 and asparagine 266 are each glycosylated (N-linked (GlcNAc...) asparagine). Residues asparagine 305 and asparagine 312 are each glycosylated (N-linked (GlcNAc...) asparagine). N-linked (GlcNAc...) asparagine glycosylation occurs at asparagine 402. N-linked (GlcNAc...) asparagine glycosylation occurs at asparagine 462. An LRR 17; degenerate repeat occupies 487–506; sequence IYFSARYNRFKGDIPLSICN. N-linked (GlcNAc...) asparagine glycosylation is found at asparagine 506 and asparagine 519. LRR repeat units follow at residues 507 to 528, 529 to 552, 554 to 576, 578 to 599, 600 to 624, 627 to 651, 701 to 724, 725 to 748, 749 to 772, and 774 to 797; these read RSSLDVLDLRYNNFTGPIPPCL, SNLLFLNLRKNNLEGSIPDTYFAD, PLRSLDVGYNRLTGKLPRSLLNC, ALQFLSVDHNGIEDTFPFYLKV, LPKLQVLLLSSNKFYGPLSPPNQGS, FPELRILEIAGNKLTGSLPQDFFVN, TSSATIDLSGNRLEGEIPESIGLL, KALIALNLSNNAFTGHIPLSLANL, VKIESLDLSSNQLSGTIPNGLGTL, and FLAYVNVSHNQLNGEIPQGTQITG. An N-linked (GlcNAc...) asparagine glycan is attached at asparagine 575. N-linked (GlcNAc...) asparagine glycosylation is present at asparagine 731. A glycan (N-linked (GlcNAc...) asparagine) is linked at asparagine 779. A helical membrane pass occupies residues 845-865; the sequence is GVAIGYGVGVLLGLAIAQLIA. Residues 866–881 lie on the Cytoplasmic side of the membrane; the sequence is SYKPEWLACLIKSRNR.

This sequence belongs to the RLP family.

It is found in the cell membrane. Its function is as follows. May be involved in ABA-induced senescence responses. This chain is Receptor-like protein 41, found in Arabidopsis thaliana (Mouse-ear cress).